Consider the following 560-residue polypeptide: Putative transport protein VP1232 (560 aa).

5 helical membrane passes run 8 to 28 (LLDQ…LAIG), 37 to 57 (LGNS…GFSF), 66 to 86 (FMLF…GIFF), 91 to 111 (HYFI…YGLS), and 164 to 184 (VGYA…AKLL). RCK C-terminal domains are found at residues 205 to 292 (LGNS…FRNG) and 293 to 376 (KEVF…KIGF). The next 6 helical transmembrane spans lie at 386 to 406 (LLAF…TMTF), 409 to 429 (VSFS…LGFL), 443 to 463 (ALNM…GLSA), 478 to 498 (VIGL…LVGA), 506 to 526 (ALLF…DVVN), and 539 to 559 (AGTY…LIIL).

Belongs to the AAE transporter (TC 2.A.81) family. YbjL subfamily.

It is found in the cell membrane. This chain is Putative transport protein VP1232, found in Vibrio parahaemolyticus serotype O3:K6 (strain RIMD 2210633).